We begin with the raw amino-acid sequence, 264 residues long: MTSDPVLSIRAASKTFGSRRALDAVSLDVNRGEMIALIGPSGSGKSTLLRSIDGLQTIDEGEGAITAFGGPVQARGKVSDQVRKARVRIGFIAQQFNLVGRLSLFSNVALGSLGRIPVVQGLLGWWPKETRDATMAALHRVGVSEYAAQRANTLSGGQQQRGAIARALVQKAKIILADEPVASLDPVSARKVMEILRDLNQSDGLTVVVTLHQVDYALRYCDRVVALKAGQKVYDGPASELKREKLIDIYGPEFEDVFWEGAPQ.

The region spanning 7–254 is the ABC transporter domain; it reads LSIRAASKTF…KLIDIYGPEF (248 aa). 39-46 contributes to the ATP binding site; it reads GPSGSGKS.

This sequence belongs to the ABC transporter superfamily. Phosphonates importer (TC 3.A.1.9.1) family. As to quaternary structure, the complex is composed of two ATP-binding proteins (PhnC), two transmembrane proteins (PhnE) and a solute-binding protein (PhnD).

The protein localises to the cell inner membrane. It carries out the reaction phosphonate(out) + ATP + H2O = phosphonate(in) + ADP + phosphate + H(+). In terms of biological role, part of the ABC transporter complex PhnCDE involved in phosphonates import. Responsible for energy coupling to the transport system. This is Phosphonates import ATP-binding protein PhnC from Caulobacter vibrioides (strain ATCC 19089 / CIP 103742 / CB 15) (Caulobacter crescentus).